The chain runs to 293 residues: Small ribosomal subunit protein uS3 (293 aa).

One can recognise a KH type-2 domain in the interval 39 to 107 (VREYLKAKLK…PVAVNIEEVR (69 aa)). The interval 210-293 (RNDLPAVETP…PATAADGKGE (84 aa)) is disordered. Basic and acidic residues predominate over residues 219–238 (PRPEEERRPRGPRRDGRPGG).

The protein belongs to the universal ribosomal protein uS3 family. As to quaternary structure, part of the 30S ribosomal subunit. Forms a tight complex with proteins S10 and S14.

Its function is as follows. Binds the lower part of the 30S subunit head. Binds mRNA in the 70S ribosome, positioning it for translation. This chain is Small ribosomal subunit protein uS3, found in Paracidovorax citrulli (strain AAC00-1) (Acidovorax citrulli).